The following is a 365-amino-acid chain: Parathion hydrolase (365 aa).

A signal peptide (tat-type signal) is located at residues 1 to 29 (MQTRRVVLKSAAAAGTLLGGLAGCASVAG). 6 residues coordinate Zn(2+): His-55, His-57, Lys-169, His-201, His-230, and Asp-301. Position 169 is an N6-carboxylysine (Lys-169).

This sequence belongs to the metallo-dependent hydrolases superfamily. Phosphotriesterase family. As to quaternary structure, homodimer. Zn(2+) serves as cofactor. In terms of processing, predicted to be exported by the Tat system. The position of the signal peptide cleavage has been experimentally proven.

The protein resides in the cell membrane. The catalysed reaction is An aryl dialkyl phosphate + H2O = dialkyl phosphate + an aryl alcohol.. Functionally, has an unusual substrate specificity for synthetic organophosphate triesters and phosphorofluoridates. All of the phosphate triesters found to be substrates are synthetic compounds. The identity of any naturally occurring substrate for the enzyme is unknown. Has no detectable activity with phosphate monoesters or diesters and no activity as an esterase or protease. It catalyzes the hydrolysis of the insecticide paraoxon at a rate approaching the diffusion limit and thus appears to be optimally evolved for utilizing this synthetic substrate. The chain is Parathion hydrolase (opd) from Brevundimonas diminuta (Pseudomonas diminuta).